We begin with the raw amino-acid sequence, 822 residues long: ATP-dependent zinc metalloprotease FtsH (822 aa).

At 1-76 the chain is on the cytoplasmic side; it reads MEFNKLELLI…NQKEPGKARK (76 aa). The segment covering 44-54 has biased composition (polar residues); sequence SLDQPSDAPSN. The tract at residues 44-71 is disordered; the sequence is SLDQPSDAPSNNKKRNLDQPDNPNQKEP. A helical transmembrane segment spans residues 77–97; the sequence is IIWSFIIIILVLGVLALIILS. The Extracellular segment spans residues 98–251; the sequence is GFSFSATSLN…QSMSLPTSYS (154 aa). Residues 252–272 form a helical membrane-spanning segment; the sequence is FYTAASLVLSILPFILLIGII. Over 273 to 822 the chain is Cytoplasmic; sequence YYSMRKMGQA…SKESSSDKKK (550 aa). ATP is bound at residue 347 to 354; it reads GPPGTGKT. His-569 lines the Zn(2+) pocket. Glu-570 is an active-site residue. His-573 and Asp-648 together coordinate Zn(2+). Basic and acidic residues predominate over residues 758-794; sequence KKELEEKKKAEDLIRKAKKESEASSKEEKEMDVEKKV. The tract at residues 758–822 is disordered; sequence KKELEEKKKA…SKESSSDKKK (65 aa). A compositionally biased stretch (low complexity) spans 796–805; sequence KPSASSTEPT. Positions 812-822 are enriched in basic and acidic residues; sequence PSKESSSDKKK.

This sequence in the central section; belongs to the AAA ATPase family. In the C-terminal section; belongs to the peptidase M41 family. In terms of assembly, homohexamer. Requires Zn(2+) as cofactor.

The protein localises to the cell membrane. Functionally, acts as a processive, ATP-dependent zinc metallopeptidase for both cytoplasmic and membrane proteins. Plays a role in the quality control of integral membrane proteins. This Malacoplasma penetrans (strain HF-2) (Mycoplasma penetrans) protein is ATP-dependent zinc metalloprotease FtsH.